The following is a 317-amino-acid chain: Pantothenate kinase (317 aa).

Residue 99-106 participates in ATP binding; that stretch reads GSVSVGKS.

This sequence belongs to the prokaryotic pantothenate kinase family.

Its subcellular location is the cytoplasm. It catalyses the reaction (R)-pantothenate + ATP = (R)-4'-phosphopantothenate + ADP + H(+). It participates in cofactor biosynthesis; coenzyme A biosynthesis; CoA from (R)-pantothenate: step 1/5. This chain is Pantothenate kinase, found in Mannheimia succiniciproducens (strain KCTC 0769BP / MBEL55E).